The following is a 366-amino-acid chain: Chorismate synthase (366 aa).

Arg48 and Arg54 together coordinate NADP(+). FMN contacts are provided by residues 125–127, 238–239, Gly278, 293–297, and Arg319; these read RSS, NA, and KPTSS.

This sequence belongs to the chorismate synthase family. In terms of assembly, homotetramer. FMNH2 is required as a cofactor.

It carries out the reaction 5-O-(1-carboxyvinyl)-3-phosphoshikimate = chorismate + phosphate. It participates in metabolic intermediate biosynthesis; chorismate biosynthesis; chorismate from D-erythrose 4-phosphate and phosphoenolpyruvate: step 7/7. Catalyzes the anti-1,4-elimination of the C-3 phosphate and the C-6 proR hydrogen from 5-enolpyruvylshikimate-3-phosphate (EPSP) to yield chorismate, which is the branch point compound that serves as the starting substrate for the three terminal pathways of aromatic amino acid biosynthesis. This reaction introduces a second double bond into the aromatic ring system. The polypeptide is Chorismate synthase (Burkholderia cenocepacia (strain HI2424)).